Here is a 555-residue protein sequence, read N- to C-terminus: CCR4-NOT transcription complex subunit 6-like (555 aa).

A required for interaction with CNOT1, CNOT3 and CNOT7 region spans residues 1–152 (MRLIGMPKEK…NLYQDPDGTR (152 aa)). LRR repeat units follow at residues 57-78 (HLTA…IAKL), 80-101 (NLVY…LGNM), 103-125 (SLRE…GRLF), and 126-148 (QLQT…YQDP). Residues 158–555 (MLDNLAVHPE…VNGVHLPNRR (398 aa)) are nuclease domain. Residue Glu-240 participates in Mg(2+) binding. Substrate is bound by residues Glu-240, Glu-276, His-360, and Pro-365. Asp-410 provides a ligand contact to Mg(2+). The active-site Proton donor/acceptor is the Asp-410. The substrate site is built by Asn-412, Asn-479, and Phe-484.

Belongs to the CCR4/nocturin family. In terms of assembly, component of the CCR4-NOT complex; distinct complexes seem to exist that differ in the participation of probably mutually exclusive catalytic subunits; the complex contains two deadenylase subunits, CNOT6 or CNOT6L, and CNOT7 or CNOT8. Interacts with CNOT1, CNOT3, CNOT7, CNOT8 and CNOT9. Interacts with TOB1. Interacts with NANOS2. Interacts with ZFP36. Interacts with ZFP36L2. Interacts with RBM46. Requires Mg(2+) as cofactor. Highly expressed in placenta, skeletal muscle, pancreas, testis and leukocytes. Weakly expressed in heart, spleen and thymus.

Its subcellular location is the cytoplasm. It is found in the nucleus. It catalyses the reaction Exonucleolytic cleavage of poly(A) to 5'-AMP.. Its activity is regulated as follows. Inhibited by free AMP, and with lesser efficiency also by CMP, GMP, UMP, ATP and neomycin. Functionally, has 3'-5' poly(A) exoribonuclease activity for synthetic poly(A) RNA substrate. Catalytic component of the CCR4-NOT complex which is one of the major cellular mRNA deadenylases and is linked to various cellular processes including bulk mRNA degradation, miRNA-mediated repression, translational repression during translational initiation and general transcription regulation. Additional complex functions may be a consequence of its influence on mRNA expression. May be involved in the deadenylation-dependent degradation of mRNAs through the 3'-UTR AU-rich element-mediated mechanism. Involved in deadenylation-dependent degradation of CDKN1B mRNA. Its mRNA deadenylase activity can be inhibited by TOB1. Mediates cell proliferation and cell survival and prevents cellular senescence. This Homo sapiens (Human) protein is CCR4-NOT transcription complex subunit 6-like (CNOT6L).